Consider the following 143-residue polypeptide: Small ribosomal subunit protein uS9 (143 aa).

The disordered stretch occupies residues 123-143 (RPEPKKFGGRGARARFQKSYR). Residues 134-143 (ARARFQKSYR) are compositionally biased toward basic residues.

The protein belongs to the universal ribosomal protein uS9 family.

The sequence is that of Small ribosomal subunit protein uS9 (RPS16) from Eremothecium gossypii (strain ATCC 10895 / CBS 109.51 / FGSC 9923 / NRRL Y-1056) (Yeast).